Here is a 211-residue protein sequence, read N- to C-terminus: Small ribosomal subunit protein uS4 (211 aa).

The segment at 27–48 is disordered; that stretch reads GRKVLERRGSQPPGQHGASVRR. An S4 RNA-binding domain is found at 99 to 162; it reads RRLDNVVFRL…RKRDYFKDLE (64 aa).

Belongs to the universal ribosomal protein uS4 family. As to quaternary structure, part of the 30S ribosomal subunit. Contacts protein S5. The interaction surface between S4 and S5 is involved in control of translational fidelity.

One of the primary rRNA binding proteins, it binds directly to 16S rRNA where it nucleates assembly of the body of the 30S subunit. In terms of biological role, with S5 and S12 plays an important role in translational accuracy. This is Small ribosomal subunit protein uS4 from Herpetosiphon aurantiacus (strain ATCC 23779 / DSM 785 / 114-95).